Reading from the N-terminus, the 326-residue chain is MLPAFMSLRHFTTTTMRRAASEFRMPVPWGELRGQVWGPSHGRPVLCLHGWADNSGTFNTLVPLLPNDWRFVAIDFPGHGLSSHRPDGCFYAFPFYVADVRRVVEALQWKRFSIIGHSMGGNVAGMFSALYPEMVESVVLLDTYGFLPTEVTDMFTNMRKGINDQIQYDNMANERKERVYTYEKAKERLKVANPYLSDQSADILLERAVREVDGGFVFTRDFRINLKNIIYINIDQCLHVLSQVKAKVMLLLAKDGLFKTFTLPDGYADRICKSWTDQKATFVEVEGDHHVHLNNPEAVSSVITDFLQPQSPDQTESQSGNQTSRL.

In terms of domain architecture, AB hydrolase-1 spans 44-155 (PVLCLHGWAD…FLPTEVTDMF (112 aa)). The active site involves S118.

The protein belongs to the AB hydrolase superfamily.

Probable serine hydrolase. In Danio rerio (Zebrafish), this protein is Serine hydrolase-like protein (serhl).